Reading from the N-terminus, the 481-residue chain is Pentatricopeptide repeat-containing protein At2g48000 (481 aa).

PPR repeat units follow at residues 147–181 (TTSVYNALMGAYLCNGLSHHCEQLFLDFNSQQDGP), 187–221 (SVSTYNILISLYGRLIMVERMESVFLQLQQLNILP), 222–256 (DSSTYNNLIAGYIYAWDWDKMEATFHSMKNGLVKP), 257–287 (TLATYLLMLRGYANSGNLLRMEDMYQAVKRH), 292–324 (EIKLIESMICAYYRSCHKDRIRKIKTLSKLIPK), 328–362 (KPWLYLLLMQVYAKDDNLHAMENFIDQAITKGLQI), 364–398 (TDGIMRSIVASYFRCNAVDKLAKFVQRANSAGWKM), 399–433 (SRSMFHGLMIMYGSQKRFKEMENVLSEMESFKISR), and 434–469 (SKKTLCILLRVYAATHGQEHKVNQVAGMMLKHGHDF).

It belongs to the PPR family. P subfamily.

In Arabidopsis thaliana (Mouse-ear cress), this protein is Pentatricopeptide repeat-containing protein At2g48000.